Here is a 441-residue protein sequence, read N- to C-terminus: Eukaryotic translation initiation factor 3 subunit E (441 aa).

Residues Ile-223–Pro-407 enclose the PCI domain.

It belongs to the eIF-3 subunit E family. Component of the eukaryotic translation initiation factor 3 (eIF-3) complex (Potential). Binds to the translation initiation factors TIF3F1 and TIF3H1. Associates with the CSN (COP9 signalosome) complex. Interacts directly with CSN1, CSN4, CSN6A, CSN6B, CSN7, CSN8 and TIF3C1. Binds to 40S small ribosomal subunit S9 (RPS9B and RPS9C) via its N-terminal part. Interacts with the 26S proteasome subunit RPN12a via its C-terminal part. Also binds with At1g27930 and At4g30620.

It localises to the cytoplasm. Its subcellular location is the nucleus. Its function is as follows. Component of the eukaryotic translation initiation factor 3 (eIF-3) complex, which is involved in protein synthesis of a specialized repertoire of mRNAs and, together with other initiation factors, stimulates binding of mRNA and methionyl-tRNAi to the 40S ribosome. The eIF-3 complex specifically targets and initiates translation of a subset of mRNAs involved in cell proliferation (Potential). Negatively regulates translation during flower development. In Arabidopsis thaliana (Mouse-ear cress), this protein is Eukaryotic translation initiation factor 3 subunit E.